Consider the following 146-residue polypeptide: 3-dehydroquinate dehydratase (146 aa).

Tyrosine 23 functions as the Proton acceptor in the catalytic mechanism. The substrate site is built by asparagine 74, histidine 80, and aspartate 87. Histidine 100 (proton donor) is an active-site residue. Substrate-binding positions include 101-102 and arginine 111; that span reads IS.

It belongs to the type-II 3-dehydroquinase family. Homododecamer.

It catalyses the reaction 3-dehydroquinate = 3-dehydroshikimate + H2O. The protein operates within metabolic intermediate biosynthesis; chorismate biosynthesis; chorismate from D-erythrose 4-phosphate and phosphoenolpyruvate: step 3/7. In terms of biological role, catalyzes a trans-dehydration via an enolate intermediate. In Bacillus cereus (strain B4264), this protein is 3-dehydroquinate dehydratase.